Reading from the N-terminus, the 288-residue chain is Putative transcription factor kapC (288 aa).

Residues 1–10 show a composition bias toward pro residues; the sequence is MQPTLAPAPH. Residues 1–121 form a disordered region; that stretch reads MQPTLAPAPH…AAQRAFRQRK (121 aa). Residues 26 to 41 are compositionally biased toward low complexity; sequence HDQLLAAHQHLSHPQQ. A compositionally biased stretch (pro residues) spans 42–54; that stretch reads ARPPPPPPQPPHM. The span at 84-93 shows a compositional bias: polar residues; that stretch reads QPDLSGQESP. Positions 100-163 constitute a bZIP domain; sequence PLSTSKRAAQ…EYIINLQSRL (64 aa). The tract at residues 101 to 124 is basic motif; the sequence is LSTSKRAAQNRAAQRAFRQRKEAH. The segment covering 106–116 has biased composition (low complexity); the sequence is RAAQNRAAQRA. The leucine-zipper stretch occupies residues 128-159; the sequence is LEGKVKAYETMGEAIKALQAENYQLREYIINL. Disordered stretches follow at residues 172 to 226 and 242 to 288; these read ELPG…NDDM and PPTE…PLIS. The span at 202–212 shows a compositional bias: pro residues; that stretch reads PVPPPTAPQQP. Over residues 213-222 the composition is skewed to low complexity; the sequence is QPAQNQASAP.

Belongs to the bZIP family.

It is found in the nucleus. Its function is as follows. Putative transcription factor. The chain is Putative transcription factor kapC (kapC) from Aspergillus clavatus (strain ATCC 1007 / CBS 513.65 / DSM 816 / NCTC 3887 / NRRL 1 / QM 1276 / 107).